Reading from the N-terminus, the 208-residue chain is Probable GTP-binding protein EngB (208 aa).

Positions 23–205 constitute an EngB-type G domain; the sequence is LTSEMVVLGR…RQTLLKHLLT (183 aa). GTP contacts are provided by residues 31 to 38, 57 to 61, 84 to 87, 154 to 157, and 182 to 184; these read GRSNVGKS, GKTRL, DLPG, TKFD, and FNA. Residues S38 and T59 each contribute to the Mg(2+) site.

The protein belongs to the TRAFAC class TrmE-Era-EngA-EngB-Septin-like GTPase superfamily. EngB GTPase family. Mg(2+) is required as a cofactor.

Functionally, necessary for normal cell division and for the maintenance of normal septation. The sequence is that of Probable GTP-binding protein EngB from Helicobacter pylori (strain ATCC 700392 / 26695) (Campylobacter pylori).